Here is a 138-residue protein sequence, read N- to C-terminus: MNFKTSLICFALLLIGTLCSAYSNQERQRDSRRVAEIMRTSWDDNTKIKRIQELLTIYNRMAPSLRPDERARMDRFISGYTGEIMVDGVPSQGGARRIFKKILSPAAKSVATGFFTELGASLASILTSWFPANTERNH.

Residues 1-21 (MNFKTSLICFALLLIGTLCSA) form the signal peptide.

The protein belongs to the Turandot family.

Its subcellular location is the secreted. In terms of biological role, a humoral factor that may play a role in stress tolerance. This is Protein Turandot B from Drosophila melanogaster (Fruit fly).